We begin with the raw amino-acid sequence, 347 residues long: S-adenosylmethionine:tRNA ribosyltransferase-isomerase (347 aa).

Belongs to the QueA family. Monomer.

It localises to the cytoplasm. The catalysed reaction is 7-aminomethyl-7-carbaguanosine(34) in tRNA + S-adenosyl-L-methionine = epoxyqueuosine(34) in tRNA + adenine + L-methionine + 2 H(+). The protein operates within tRNA modification; tRNA-queuosine biosynthesis. Transfers and isomerizes the ribose moiety from AdoMet to the 7-aminomethyl group of 7-deazaguanine (preQ1-tRNA) to give epoxyqueuosine (oQ-tRNA). This Ectopseudomonas mendocina (strain ymp) (Pseudomonas mendocina) protein is S-adenosylmethionine:tRNA ribosyltransferase-isomerase.